The primary structure comprises 359 residues: Gap junction alpha-5 protein (359 aa).

Topologically, residues 1-19 (MGDWSFLGEFLEEVHKHST) are cytoplasmic. The chain crosses the membrane as a helical span at residues 20 to 40 (VIGKVWLTVLFIFRMLVLGTA). The Extracellular segment spans residues 41-76 (AESSWGDEQADFLCDTMQPGCENVCYDQAFPISHIR). A helical membrane pass occupies residues 77-97 (YWVLQVIFVSTPSLVYLGHAV). Residues 98–165 (HMVRVQEKRK…CSILIRTTME (68 aa)) are Cytoplasmic-facing. Residues 166 to 186 (VAFIVGQYLLYGVFLDTLHVC) traverse the membrane as a helical segment. Residues 187–206 (RRSPCPHPVNCYVSRPTEKN) lie on the Extracellular side of the membrane. A helical membrane pass occupies residues 207–227 (VFIVFMLAVAGLSLFLSLAEL). Residues 228–359 (YHLGWKKIRQ…SKARSDDLSV (132 aa)) are Cytoplasmic-facing. 2 disordered regions span residues 285 to 305 (SNKMASQQNTDNLSTEQVRSQ) and 317 to 359 (RYAQ…DLSV). Residues Ser354 and Ser358 each carry the phosphoserine modification.

It belongs to the connexin family. Alpha-type (group II) subfamily. A connexon is composed of a hexamer of connexins.

The protein resides in the cell membrane. The protein localises to the cell junction. Its subcellular location is the gap junction. In terms of biological role, one gap junction consists of a cluster of closely packed pairs of transmembrane channels, the connexons, through which materials of low MW diffuse from one cell to a neighboring cell. The protein is Gap junction alpha-5 protein (GJA5) of Bos taurus (Bovine).